The following is a 447-amino-acid chain: MSNLSLDFSDNTFQPLAARMRPENLAQYIGQQHLLAAGKPLPRAIEAGHLHSMILWGPPGTGKTTLAEVIARYANADVERISAVTSGVKEIREAIERARQNRNAGRRTILFVDEVHRFNKSQQDAFLPHIEDGTITFIGATTENPSFELNSALLSRARVYLLKSLSTEDIEQVLTQAMEDKTRGYGGQDIVLPDETRRAIAELVNGDARRALNTLEMMADMAEVDDSGKRVLKPELLTEIAGERSARFDNKGDRFYDLISALHKSVRGSAPDAALYWYARIITAGGDPLYVARRCLAIASEDVGNADPRAMQVAIAAWDCFTRVGPAEGERAIAQAIVYLACAPKSNAVYTAFKAALADARERPDYDVPVHLRNAPTKLMKEMGYGQEYRYAHDEANAYAAGEVYFPPEIAQTRYYFPTNRGLEGKIGEKLAWLAEQDQNSPIKRYR.

ATP is bound at residue 57 to 64 (GPPGTGKT).

This sequence belongs to the AAA ATPase family. RarA/MGS1/WRNIP1 subfamily.

Functionally, DNA-dependent ATPase that plays important roles in cellular responses to stalled DNA replication processes. The protein is Replication-associated recombination protein A (rarA) of Escherichia coli O157:H7.